Consider the following 131-residue polypeptide: Large ribosomal subunit protein bL17 (131 aa).

The protein belongs to the bacterial ribosomal protein bL17 family. In terms of assembly, part of the 50S ribosomal subunit. Contacts protein L32.

The protein is Large ribosomal subunit protein bL17 of Thermotoga sp. (strain RQ2).